The chain runs to 832 residues: Protein P (832 aa).

The interval 1-177 is terminal protein domain (TP); sequence MPLSYQHFRR…FCGSPYSWEQ (177 aa). A spacer region spans residues 178-335; sequence KLQHGAESFH…YCLSHIVNLL (158 aa). Disordered regions lie at residues 186 to 229 and 275 to 305; these read FHQQ…QGRS and YPTV…RSQS. Positions 336-679 are polymerase/reverse transcriptase domain (RT); sequence EDWGPCTEHG…YMNLYPVARQ (344 aa). Residues 346–589 form the Reverse transcriptase domain; the sequence is EHHIRIPRTP…YSLHFMGYVI (244 aa). Positions 418, 540, and 541 each coordinate Mg(2+).

It belongs to the hepadnaviridae P protein family.

It catalyses the reaction DNA(n) + a 2'-deoxyribonucleoside 5'-triphosphate = DNA(n+1) + diphosphate. The enzyme catalyses Endonucleolytic cleavage to 5'-phosphomonoester.. With respect to regulation, activated by host HSP70 and HSP40 in vitro to be able to bind the epsilon loop of the pgRNA. Because deletion of the RNase H region renders the protein partly chaperone-independent, the chaperones may be needed indirectly to relieve occlusion of the RNA-binding site by this domain. Inhibited by several reverse-transcriptase inhibitors: Lamivudine, Adefovir and Entecavir. Multifunctional enzyme that converts the viral RNA genome into dsDNA in viral cytoplasmic capsids. This enzyme displays a DNA polymerase activity that can copy either DNA or RNA templates, and a ribonuclease H (RNase H) activity that cleaves the RNA strand of RNA-DNA heteroduplexes in a partially processive 3'- to 5'-endonucleasic mode. Neo-synthesized pregenomic RNA (pgRNA) are encapsidated together with the P protein, and reverse-transcribed inside the nucleocapsid. Initiation of reverse-transcription occurs first by binding the epsilon loop on the pgRNA genome, and is initiated by protein priming, thereby the 5'-end of (-)DNA is covalently linked to P protein. Partial (+)DNA is synthesized from the (-)DNA template and generates the relaxed circular DNA (RC-DNA) genome. After budding and infection, the RC-DNA migrates in the nucleus, and is converted into a plasmid-like covalently closed circular DNA (cccDNA). The activity of P protein does not seem to be necessary for cccDNA generation, and is presumably released from (+)DNA by host nuclear DNA repair machinery. This Homo sapiens (Human) protein is Protein P.